Here is a 275-residue protein sequence, read N- to C-terminus: Taurine transport system permease protein TauC (275 aa).

7 helical membrane passes run 20–42 (LSRQVTLSIGTLAVLLTVWWTVA), 87–107 (IMLALFAAVLFGIPVGIAMGL), 124–144 (PVPPLAYLPLMVIWFGIGETS), 146–166 (ILLIYLAIFAPVAMSALAGVK), 186–206 (VLWFVILPGALPEILTGLRIG), 209–229 (VGWSTLVAAELIAATRGLGFM), and 236–256 (FLATDVVLAGIAVIAIIAFLL). The 185-residue stretch at 80–264 (LAASLTRIML…LLELGLRALQ (185 aa)) folds into the ABC transmembrane type-1 domain.

The protein belongs to the binding-protein-dependent transport system permease family. CysTW subfamily.

It is found in the cell inner membrane. Its function is as follows. Part of a binding-protein-dependent transport system for taurine. Probably responsible for the translocation of the substrate across the membrane. This Escherichia coli (strain K12) protein is Taurine transport system permease protein TauC (tauC).